We begin with the raw amino-acid sequence, 737 residues long: Polyribonucleotide nucleotidyltransferase (737 aa).

Mg(2+) contacts are provided by Asp489 and Asp495. Residues Pro556–Ile615 form the KH domain. An S1 motif domain is found at Asp625–Lys693. Positions Ser691–Glu737 are disordered. Residues Pro700–Pro714 show a composition bias toward basic and acidic residues. The span at His715–Lys724 shows a compositional bias: basic residues. Over residues Pro725–Glu737 the composition is skewed to basic and acidic residues.

This sequence belongs to the polyribonucleotide nucleotidyltransferase family. It depends on Mg(2+) as a cofactor.

The protein localises to the cytoplasm. It catalyses the reaction RNA(n+1) + phosphate = RNA(n) + a ribonucleoside 5'-diphosphate. Its function is as follows. Involved in mRNA degradation. Catalyzes the phosphorolysis of single-stranded polyribonucleotides processively in the 3'- to 5'-direction. The sequence is that of Polyribonucleotide nucleotidyltransferase from Streptococcus pneumoniae (strain Taiwan19F-14).